A 148-amino-acid polypeptide reads, in one-letter code: Snaclec B9 (148 aa).

Positions 1–24 (MGRFIFVSFGLLVVFLSLSGTGAA) are cleaved as a signal peptide. Intrachain disulfides connect Cys27–Cys38, Cys55–Cys144, and Cys121–Cys136. Positions 34 to 145 (YDQHCYKVFD…CRLLGHFVCK (112 aa)) constitute a C-type lectin domain. 2 N-linked (GlcNAc...) asparagine glycosylation sites follow: Asn57 and Asn60.

This sequence belongs to the snaclec family. In terms of assembly, heterodimer; disulfide-linked. In terms of tissue distribution, expressed by the venom gland.

The protein resides in the secreted. Its function is as follows. Interferes with one step of hemostasis (modulation of platelet aggregation, or coagulation cascade, for example). The sequence is that of Snaclec B9 from Macrovipera lebetinus (Levantine viper).